Reading from the N-terminus, the 201-residue chain is MYB-like transcription factor EOBI (201 aa).

HTH myb-type domains are found at residues 10–62 (DVEV…LNYL) and 63–117 (RPDV…QKHI). 2 consecutive DNA-binding regions (H-T-H motif) follow at residues 38–62 (WNSL…LNYL) and 90–113 (WSKI…RTRI). Positions 121–170 (DQNMKKPSKCEQNDQKAISTSQASTGPTDTIDSYSPSSYTENTNNNMENI) are disordered. Over residues 135-159 (QKAISTSQASTGPTDTIDSYSPSSY) the composition is skewed to polar residues. The span at 160-169 (TENTNNNMEN) shows a compositional bias: low complexity.

As to expression, expressed exclusively in flower organs. Accumulates mostly in flower limbs, to a lower extent in pistils and flower tubes, and, at low levels, in stamens.

The protein localises to the nucleus. MYB-type transcription factor controlling the production of volatile organic compounds (VOCs), including floral volatile benzenoids and phenylpropanoids (FVBP), in flowers of fragrant cultivars (e.g. cv. Mitchell and cv. V26) by regulating the expression of ODO1, a key regulator of the shikimate pathway, and of several biosynthetic floral scent-related genes (e.g. IGS, EGS, BSMT1, BSMT2, PAL1, PAL2, EPSPS, DAHPS, CS, CM1, ADT1 and PPA-AT). Binds to and activates the promoters of at least ODO1, IGS1 and PAL1. This is MYB-like transcription factor EOBI from Petunia hybrida (Petunia).